A 429-amino-acid chain; its full sequence is tRNA modification GTPase MnmE (429 aa).

The (6S)-5-formyl-5,6,7,8-tetrahydrofolate site is built by arginine 20, glutamate 77, and arginine 117. The TrmE-type G domain maps to 213–353 (GFEVAILGAP…LVKAVSHRLS (141 aa)). A K(+)-binding site is contributed by asparagine 223. GTP-binding positions include 223 to 228 (NVGKSS), 242 to 248 (SSIAGTT), and 267 to 270 (DTAG). Position 227 (serine 227) interacts with Mg(2+). Serine 242, isoleucine 244, and threonine 247 together coordinate K(+). Threonine 248 serves as a coordination point for Mg(2+). A (6S)-5-formyl-5,6,7,8-tetrahydrofolate-binding site is contributed by lysine 429.

It belongs to the TRAFAC class TrmE-Era-EngA-EngB-Septin-like GTPase superfamily. TrmE GTPase family. Homodimer. Heterotetramer of two MnmE and two MnmG subunits. It depends on K(+) as a cofactor.

The protein resides in the cytoplasm. Its function is as follows. Exhibits a very high intrinsic GTPase hydrolysis rate. Involved in the addition of a carboxymethylaminomethyl (cmnm) group at the wobble position (U34) of certain tRNAs, forming tRNA-cmnm(5)s(2)U34. This Dinoroseobacter shibae (strain DSM 16493 / NCIMB 14021 / DFL 12) protein is tRNA modification GTPase MnmE.